The primary structure comprises 198 residues: Probable GTP-binding protein EngB (198 aa).

Residues 21–195 enclose the EngB-type G domain; sequence NFSEVAFLGR…EDIIINQTLG (175 aa). GTP is bound by residues 29 to 36, 56 to 60, 81 to 84, 151 to 154, and 174 to 176; these read GRSNVGKS, GKTQL, DLPG, TKCD, and VSN. The Mg(2+) site is built by serine 36 and threonine 58.

Belongs to the TRAFAC class TrmE-Era-EngA-EngB-Septin-like GTPase superfamily. EngB GTPase family. Mg(2+) is required as a cofactor.

Necessary for normal cell division and for the maintenance of normal septation. This chain is Probable GTP-binding protein EngB, found in Campylobacter jejuni (strain RM1221).